The following is a 97-amino-acid chain: Large ribosomal subunit protein eL21 (97 aa).

Residues 1-26 (MQKSEGFRSKTRYKLQKHPRQKGMAP) form a disordered region. The span at 9–21 (SKTRYKLQKHPRQ) shows a compositional bias: basic residues.

It belongs to the eukaryotic ribosomal protein eL21 family.

The protein is Large ribosomal subunit protein eL21 of Methanococcus maripaludis (strain C6 / ATCC BAA-1332).